A 312-amino-acid polypeptide reads, in one-letter code: Olfactory receptor 4L1 (312 aa).

At 1–25 the chain is on the extracellular side; it reads MDLKNGSLVTEFILLGFFGRWELQI. N-linked (GlcNAc...) asparagine glycosylation occurs at Asn-5. Residues 26–49 traverse the membrane as a helical segment; the sequence is FFFVTFSLIYGATVMGNILIMVTV. Topologically, residues 50–57 are cytoplasmic; sequence TCRSTLHS. The helical transmembrane segment at 58–79 threads the bilayer; the sequence is PLYFLLGNLSFLDMCLSTATTP. Residues 80 to 100 are Extracellular-facing; sequence KMIIDLLTDHKTISVWGCVTQ. Residues Cys-97 and Cys-189 are joined by a disulfide bond. The helical transmembrane segment at 101–120 threads the bilayer; that stretch reads MFFMHFFGGAEMTLLIIMAF. Over 121-139 the chain is Cytoplasmic; sequence DRYVAICKPLHYRTIMSHK. Residues 140–158 form a helical membrane-spanning segment; it reads LLKGFAILSWIIGFLHSIS. Residues 159 to 195 lie on the Extracellular side of the membrane; the sequence is QIVLTMNLPFCGHNVINNIFCDLPLVIKLACIETYTL. A helical membrane pass occupies residues 196–219; it reads ELFVIADSGLLSFTCFILLLVSYI. Topologically, residues 220–235 are cytoplasmic; the sequence is VILVSVPKKSSHGLSK. A helical membrane pass occupies residues 236 to 258; that stretch reads ALSTLSAHIIVVTLFFGPCIFIY. The Extracellular segment spans residues 259–269; that stretch reads VWPFSSLASNK. N-linked (GlcNAc...) asparagine glycosylation occurs at Asn-268. The helical transmembrane segment at 270–289 threads the bilayer; that stretch reads TLAVFYTVITPLLNPSIYTL. Residues 290-312 lie on the Cytoplasmic side of the membrane; it reads RNKKMQEAIRKLRFQYVSSAQNF.

This sequence belongs to the G-protein coupled receptor 1 family.

The protein resides in the cell membrane. In terms of biological role, odorant receptor. This chain is Olfactory receptor 4L1 (OR4L1), found in Homo sapiens (Human).